The sequence spans 442 residues: MENAKMNSLIAQYPLVEDLVALKETTWFNPGTTSLAEGLPYVGLTEQDVQDAHARLSRFAPYLAKAFPETAAAGGIIESELVAIPAMQKRLEKEYQQPIAGQLLLKKDSHLPISGSIKARGGIYEVLAHAEKLALEAGLLTLEDDYSKLLSPEFKQFFSQYSIAVGSTGNLGLSIGIMSARIGFKVTVHMSADARAWKKAKLRSHGVTVVEYEQDYGVAVEEGRKAAQSDPNCFFIDDENSRTLFLGYSVAGQRLKAQFAQQGRIVDADNPLFVYLPCGVGGGPGGVAFGLKLAFGDHVHCFFAEPTHSPCMLLGVHTGLHDQISVQDIGIDNLTAADGLAVGRASGFVGRAMERLLDGFYTLSDQTMYDMLGWLAQEEGIRLEPSALAGMAGSQRVCASVSYQQMHGFSAEQLRNATHLVWATGGGMVPEEEMNQYLAKGR.

The residue at position 118 (K118) is an N6-(pyridoxal phosphate)lysine.

Belongs to the serine/threonine dehydratase family. DsdA subfamily. Monomer. Requires pyridoxal 5'-phosphate as cofactor.

It carries out the reaction D-serine = pyruvate + NH4(+). In Escherichia coli O6:H1 (strain CFT073 / ATCC 700928 / UPEC), this protein is D-serine dehydratase.